Reading from the N-terminus, the 62-residue chain is Large ribosomal subunit protein bL33 (62 aa).

Belongs to the bacterial ribosomal protein bL33 family.

The chain is Large ribosomal subunit protein bL33 from Azobacteroides pseudotrichonymphae genomovar. CFP2.